The sequence spans 418 residues: NADH-quinone oxidoreductase subunit D (418 aa).

It belongs to the complex I 49 kDa subunit family. As to quaternary structure, NDH-1 is composed of 14 different subunits. Subunits NuoB, C, D, E, F, and G constitute the peripheral sector of the complex.

It localises to the cell inner membrane. It carries out the reaction a quinone + NADH + 5 H(+)(in) = a quinol + NAD(+) + 4 H(+)(out). NDH-1 shuttles electrons from NADH, via FMN and iron-sulfur (Fe-S) centers, to quinones in the respiratory chain. The immediate electron acceptor for the enzyme in this species is believed to be ubiquinone. Couples the redox reaction to proton translocation (for every two electrons transferred, four hydrogen ions are translocated across the cytoplasmic membrane), and thus conserves the redox energy in a proton gradient. The protein is NADH-quinone oxidoreductase subunit D of Bordetella avium (strain 197N).